The sequence spans 269 residues: MNQEDLDPDSTTDVGDVTNTEEELIRECEEMWKDMEECQNKLSLIGTETLTDSNAQLSLLIMQVKCLTAELSQWQKKTPETIPLTEDVLITLGKEEFQKLRQDLEMVLSTKESKNEKLKEDLEREQRWLDEQQQIMESLNVLHSELKNKVETFSESRIFNELKTKMLNIKEYKEKLLSTLGEFLEDHFPLPDRSVKKKKKNIQESSVNLITLHEMLEILINRLFDVPHDPYVKISDSFWPPYVELLLRNGIALRHPEDPTRIRLEAFHQ.

The segment covering 1-10 has biased composition (acidic residues); sequence MNQEDLDPDS. The tract at residues 1–20 is disordered; it reads MNQEDLDPDSTTDVGDVTNT. 2 coiled-coil regions span residues 22–42 and 98–151; these read EELI…QNKL and QKLR…NKVE.

The protein belongs to the CENP-K/MCM22 family. Component of the CENPA-CAD complex, composed of CENPI, CENPK, CENPL, CENPO, CENPP, CENPQ, CENPR and CENPS. The CENPA-CAD complex interacts with the CENPA-NAC complex, at least composed of CENPA, CENPC, CENPH, CENPM, CENPN, CENPT and CENPU. Interacts directly with CENPH. As to expression, detected in several fetal organs with highest levels in fetal liver. In adults, it is weakly expressed in lung and placenta.

The protein localises to the nucleus. It is found in the chromosome. The protein resides in the centromere. Its subcellular location is the kinetochore. In terms of biological role, component of the CENPA-CAD (nucleosome distal) complex, a complex recruited to centromeres which is involved in assembly of kinetochore proteins, mitotic progression and chromosome segregation. May be involved in incorporation of newly synthesized CENPA into centromeres via its interaction with the CENPA-NAC complex. Acts in coordination with KNL1 to recruit the NDC80 complex to the outer kinetochore. The chain is Centromere protein K (CENPK) from Homo sapiens (Human).